The following is a 78-amino-acid chain: MSRVCQVTGKRPAVGNNRSHAMNATRRRFLPNLHTHRFWVESENRFVTLRLTAKGMRIIDKKGIDAVLAEIRARGEKI.

The protein belongs to the bacterial ribosomal protein bL28 family.

This Haemophilus influenzae (strain 86-028NP) protein is Large ribosomal subunit protein bL28.